Reading from the N-terminus, the 251-residue chain is 2,3-bisphosphoglycerate-dependent phosphoglycerate mutase (251 aa).

Residues 11–18 (RHGESDWN), 24–25 (TG), Arg-63, 90–93 (ERHY), Lys-101, 117–118 (RR), and 184–185 (GN) contribute to the substrate site. Catalysis depends on His-12, which acts as the Tele-phosphohistidine intermediate. The active-site Proton donor/acceptor is the Glu-90.

This sequence belongs to the phosphoglycerate mutase family. BPG-dependent PGAM subfamily.

The catalysed reaction is (2R)-2-phosphoglycerate = (2R)-3-phosphoglycerate. It participates in carbohydrate degradation; glycolysis; pyruvate from D-glyceraldehyde 3-phosphate: step 3/5. Its function is as follows. Catalyzes the interconversion of 2-phosphoglycerate and 3-phosphoglycerate. This is 2,3-bisphosphoglycerate-dependent phosphoglycerate mutase from Mycobacterium ulcerans (strain Agy99).